Consider the following 484-residue polypeptide: Putative beta-barrel assembly-enhancing protease (484 aa).

Positions 1-23 are cleaved as a signal peptide; sequence MKFFPTRTLLCLCIAAPCLPAIA. Residue histidine 133 participates in Zn(2+) binding. The active site involves glutamate 134. Positions 137 and 198 each coordinate Zn(2+). Aspartate 202 (proton donor) is an active-site residue. TPR repeat units follow at residues 307 to 340, 341 to 374, 376 to 408, and 426 to 459; these read PSIQ…QPDN, HFYL…TPNN, VLTI…NPND, and AEDL…VELG.

The protein belongs to the peptidase M48 family. BepA subfamily. Requires Zn(2+) as cofactor.

Its subcellular location is the periplasm. Functionally, functions both as a chaperone and a metalloprotease. Maintains the integrity of the outer membrane by promoting either the assembly or the elimination of outer membrane proteins, depending on their folding state. The polypeptide is Putative beta-barrel assembly-enhancing protease (Vibrio cholerae serotype O1 (strain ATCC 39315 / El Tor Inaba N16961)).